The following is a 491-amino-acid chain: Serralysin (491 aa).

Positions 1 to 16 (MGSFLLKKAVGLSNIS) are excised as a propeptide. Residue H186 coordinates Zn(2+). The active site involves E187. Residues H190, H196, and Y226 each coordinate Zn(2+). Ca(2+) is bound by residues R263, G265, D295, G297, G298, D300, T337, E339, G344, G346, D348, N353, A355, N357, G361, G362, G364, D366, G370, G373, D384, G388, G389, G391, D402, D409, and D419. Hemolysin-type calcium-binding repeat units lie at residues 342–359 (IGGFGNDIIHGNDADNTL), 360–377 (IGGEGDDIIYGHSGNNTI), and 378–395 (YGGRGQDTLHGGTGSNTF).

The protein belongs to the peptidase M10B family. Requires Ca(2+) as cofactor. Zn(2+) serves as cofactor.

It is found in the secreted. The catalysed reaction is Preferential cleavage of bonds with hydrophobic residues in P1'.. Ca(2+) increases protease activity. One of the virulence factors produced during swarmer cell differentiation of the bacteria, which seems to be associated with pathogenesis. The protease activity is limited to IgA1, IgA2, as well as IgG degradation. This Proteus mirabilis protein is Serralysin (zapA).